The sequence spans 338 residues: Lipoate-protein ligase A (338 aa).

In terms of domain architecture, BPL/LPL catalytic spans 29 to 216; it reads DPNQRVLFLW…AFFSHYGERV (188 aa). ATP is bound by residues R71, 76–79, and K134; that span reads GAVF. (R)-lipoate is bound at residue K134.

Belongs to the LplA family. As to quaternary structure, monomer.

The protein resides in the cytoplasm. It catalyses the reaction L-lysyl-[lipoyl-carrier protein] + (R)-lipoate + ATP = N(6)-[(R)-lipoyl]-L-lysyl-[lipoyl-carrier protein] + AMP + diphosphate + H(+). Its pathway is protein modification; protein lipoylation via exogenous pathway; protein N(6)-(lipoyl)lysine from lipoate: step 1/2. The protein operates within protein modification; protein lipoylation via exogenous pathway; protein N(6)-(lipoyl)lysine from lipoate: step 2/2. In terms of biological role, catalyzes both the ATP-dependent activation of exogenously supplied lipoate to lipoyl-AMP and the transfer of the activated lipoyl onto the lipoyl domains of lipoate-dependent enzymes. This is Lipoate-protein ligase A from Aeromonas hydrophila subsp. hydrophila (strain ATCC 7966 / DSM 30187 / BCRC 13018 / CCUG 14551 / JCM 1027 / KCTC 2358 / NCIMB 9240 / NCTC 8049).